A 122-amino-acid chain; its full sequence is Large ribosomal subunit protein uL14 (122 aa).

This sequence belongs to the universal ribosomal protein uL14 family. In terms of assembly, part of the 50S ribosomal subunit. Forms a cluster with proteins L3 and L19. In the 70S ribosome, L14 and L19 interact and together make contacts with the 16S rRNA in bridges B5 and B8.

Binds to 23S rRNA. Forms part of two intersubunit bridges in the 70S ribosome. This is Large ribosomal subunit protein uL14 from Beijerinckia indica subsp. indica (strain ATCC 9039 / DSM 1715 / NCIMB 8712).